A 296-amino-acid polypeptide reads, in one-letter code: Sulfate adenylyltransferase subunit 2 (296 aa).

This sequence belongs to the PAPS reductase family. CysD subfamily. Heterodimer composed of CysD, the smaller subunit, and CysN.

It carries out the reaction sulfate + ATP + H(+) = adenosine 5'-phosphosulfate + diphosphate. It participates in sulfur metabolism; hydrogen sulfide biosynthesis; sulfite from sulfate: step 1/3. Its function is as follows. With CysN forms the ATP sulfurylase (ATPS) that catalyzes the adenylation of sulfate producing adenosine 5'-phosphosulfate (APS) and diphosphate, the first enzymatic step in sulfur assimilation pathway. APS synthesis involves the formation of a high-energy phosphoric-sulfuric acid anhydride bond driven by GTP hydrolysis by CysN coupled to ATP hydrolysis by CysD. In Rhodospirillum rubrum (strain ATCC 11170 / ATH 1.1.1 / DSM 467 / LMG 4362 / NCIMB 8255 / S1), this protein is Sulfate adenylyltransferase subunit 2.